A 223-amino-acid chain; its full sequence is UPF0441 protein YgiB (223 aa).

Low complexity predominate over residues 178–195 (TVPKTAMAPKPATTTTVT). Residues 178-223 (TVPKTAMAPKPATTTTVTRGGFGESVAKQSTMQRSAAGTSTRSMGG) form a disordered region. Over residues 204 to 223 (AKQSTMQRSAAGTSTRSMGG) the composition is skewed to polar residues.

Belongs to the UPF0441 family.

The protein is UPF0441 protein YgiB of Salmonella heidelberg (strain SL476).